Reading from the N-terminus, the 119-residue chain is UPF0292 protein TV1259 (119 aa).

Residues 11 to 93 enclose the Toprim domain; sequence SIPIIVEGRN…YVDLYLWNFI (83 aa). Positions 17, 62, and 64 each coordinate Mg(2+).

This sequence belongs to the UPF0292 family. Mg(2+) is required as a cofactor.

This is UPF0292 protein TV1259 from Thermoplasma volcanium (strain ATCC 51530 / DSM 4299 / JCM 9571 / NBRC 15438 / GSS1).